The following is a 174-amino-acid chain: FMN reductase (NADH) RutF (174 aa).

Belongs to the non-flavoprotein flavin reductase family. RutF subfamily.

The catalysed reaction is FMNH2 + NAD(+) = FMN + NADH + 2 H(+). Catalyzes the reduction of FMN to FMNH2 which is used to reduce pyrimidine by RutA via the Rut pathway. The protein is FMN reductase (NADH) RutF of Stutzerimonas stutzeri (strain A1501) (Pseudomonas stutzeri).